Reading from the N-terminus, the 217-residue chain is uncharacterized protein (217 aa).

Helical transmembrane passes span 4-23 (IYGIFAFVVLVFFYLLGKET), 44-66 (NVVILSVIAFIGVGIFTAYLTWV), 76-98 (TVETAGLTATAFLLGGIFGSIII), 111-128 (FLYLCFIISAVLFYIHAI), 132-154 (MAMVAAVLFVLGFFFISALPLAL), 166-188 (AGTANSSLWLFSQVGSVVLIVLF), and 198-215 (LLLSAGLLAVSFLLALQL).

It localises to the cell membrane. This is an uncharacterized protein from Archaeoglobus fulgidus (strain ATCC 49558 / DSM 4304 / JCM 9628 / NBRC 100126 / VC-16).